A 107-amino-acid polypeptide reads, in one-letter code: Large ribosomal subunit protein uL24 (107 aa).

This sequence belongs to the universal ribosomal protein uL24 family. In terms of assembly, part of the 50S ribosomal subunit.

Its function is as follows. One of two assembly initiator proteins, it binds directly to the 5'-end of the 23S rRNA, where it nucleates assembly of the 50S subunit. One of the proteins that surrounds the polypeptide exit tunnel on the outside of the subunit. The protein is Large ribosomal subunit protein uL24 of Nitratidesulfovibrio vulgaris (strain ATCC 29579 / DSM 644 / CCUG 34227 / NCIMB 8303 / VKM B-1760 / Hildenborough) (Desulfovibrio vulgaris).